A 404-amino-acid polypeptide reads, in one-letter code: Phosphopentomutase (404 aa).

Mn(2+) contacts are provided by aspartate 10, aspartate 303, histidine 308, aspartate 344, histidine 345, and histidine 356.

It belongs to the phosphopentomutase family. Mn(2+) is required as a cofactor.

It is found in the cytoplasm. It catalyses the reaction 2-deoxy-alpha-D-ribose 1-phosphate = 2-deoxy-D-ribose 5-phosphate. The enzyme catalyses alpha-D-ribose 1-phosphate = D-ribose 5-phosphate. It participates in carbohydrate degradation; 2-deoxy-D-ribose 1-phosphate degradation; D-glyceraldehyde 3-phosphate and acetaldehyde from 2-deoxy-alpha-D-ribose 1-phosphate: step 1/2. Isomerase that catalyzes the conversion of deoxy-ribose 1-phosphate (dRib-1-P) and ribose 1-phosphate (Rib-1-P) to deoxy-ribose 5-phosphate (dRib-5-P) and ribose 5-phosphate (Rib-5-P), respectively. The chain is Phosphopentomutase from Shewanella sp. (strain MR-7).